The sequence spans 339 residues: Probable G-protein coupled receptor 33 (339 aa).

The Extracellular portion of the chain corresponds to 1 to 30 (MDLINSSTHVINVSTSLTNSTGVPTPAPKT). N-linked (GlcNAc...) asparagine glycans are attached at residues asparagine 5, asparagine 12, and asparagine 19. The chain crosses the membrane as a helical span at residues 31-53 (IIAASLFMAFIIGVISNGLYLWM). Topologically, residues 54–64 (LQFKMQRTVNT) are cytoplasmic. A helical membrane pass occupies residues 65–86 (LLFFHLILSYFISTLILPFMAT). Over 87–103 (SFLQDNHWVFGSVLCKA) the chain is Extracellular. A disulfide bond links cysteine 101 and cysteine 179. A helical membrane pass occupies residues 104–124 (FNSTLSVSMFASVFFLSAISV). At 125-143 (ARYYLILHPVWSQQHRTPH) the chain is on the cytoplasmic side. A helical transmembrane segment spans residues 144–165 (WASRIALQIWISATILSIPYLV). Residues 166 to 209 (FRTTHDDHKGRIKCQNNYIVSTDWESKEHQTLGQWIHAACFVGR) are Extracellular-facing. A helical membrane pass occupies residues 210-230 (FLLGFLLPFLVIIFCYKRVAT). Over 231 to 246 (KMKEKGLFKSSKPFKV) the chain is Cytoplasmic. The helical transmembrane segment at 247-268 (MVTAVISFFVCWMPYHVHSGLV) threads the bilayer. At 269-283 (LTKSQPLPLHLTLGL) the chain is on the extracellular side. Residues 284–303 (AVVTISFNTVVSPVLYLFTG) form a helical membrane-spanning segment. Residues 304 to 339 (ENFKVFKKSILALFNSTFSDISSTERTQTLNSETEI) are Cytoplasmic-facing.

The protein belongs to the G-protein coupled receptor 1 family. In terms of tissue distribution, expressed predominantly in lung, spleen and testis.

The protein resides in the cell membrane. Its function is as follows. Orphan receptor; could be a chemoattractant receptor. The chain is Probable G-protein coupled receptor 33 (Gpr33) from Mus musculus (Mouse).